A 326-amino-acid polypeptide reads, in one-letter code: Putative HTH-type transcriptional regulatory protein MmarC7_1702 (326 aa).

The region spanning 128–183 is the HTH cro/C1-type domain; the sequence is LRETREKLKISVGELAEISRVSRKTIYKYEQNEANPSAEVAIKIEEYLDVPLIKGI. The H-T-H motif DNA-binding region spans 139-158; it reads VGELAEISRVSRKTIYKYEQ.

This chain is Putative HTH-type transcriptional regulatory protein MmarC7_1702, found in Methanococcus maripaludis (strain C7 / ATCC BAA-1331).